We begin with the raw amino-acid sequence, 60 residues long: Cytotoxin 2 (60 aa).

4 disulfide bridges follow: C3/C21, C14/C38, C42/C53, and C54/C59.

This sequence belongs to the three-finger toxin family. Short-chain subfamily. Type IA cytotoxin sub-subfamily. Monomer in solution; Homodimer and oligomer in the presence of negatively charged lipids forming a pore with a size ranging between 20 and 30 Angstroms. As to expression, expressed by the venom gland.

The protein localises to the secreted. Its subcellular location is the target cell membrane. Its function is as follows. Shows cytolytic activity on many different cells by forming pore in lipid membranes. In vivo, increases heart rate or kills the animal by cardiac arrest. In addition, it binds to heparin with high affinity, interacts with Kv channel-interacting protein 1 (KCNIP1) in a calcium-independent manner, and binds to integrin alpha-V/beta-3 (ITGAV/ITGB3) with moderate affinity. The protein is Cytotoxin 2 of Naja nivea (Cape cobra).